The following is a 383-amino-acid chain: Serine protease 23 (383 aa).

Positions 1-19 (MAGIPGLLFLLFLLLCAVG) are cleaved as a signal peptide. A glycan (N-linked (GlcNAc...) asparagine) is linked at Asn-93. Residues 108-127 (SSGGGAQHRDSGSSGKSRRK) are disordered. Ser-109 carries the phosphoserine; by FAM20C modification. Cys-160 and Cys-176 are oxidised to a cystine. The active-site Charge relay system is His-175. Asn-207 is a glycosylation site (N-linked (GlcNAc...) asparagine). Active-site charge relay system residues include Asp-240 and Ser-316.

The protein belongs to the peptidase S1 family.

The protein resides in the secreted. The chain is Serine protease 23 (PRSS23) from Macaca mulatta (Rhesus macaque).